The following is a 375-amino-acid chain: Terpene cyclase braA (375 aa).

Mg(2+) contacts are provided by D116, N264, and S268. A D(D/E)XX(D/E) motif motif is present at residues 116 to 120 (DDEID). The NSE motif motif lies at 264–272 (NDVLSLQKE). Residues 348–355 (WSYSCERY) carry the WxxxxxRY motif motif. R354 and Y355 together coordinate (2E,6E)-farnesyl diphosphate.

The protein belongs to the terpene synthase family. In terms of assembly, homodimer. It depends on Mg(2+) as a cofactor.

It catalyses the reaction (2E,6E)-farnesyl diphosphate + H2O = trichobrasilenol + diphosphate. It functions in the pathway secondary metabolite biosynthesis. In terms of biological role, terpene cyclase; part of the gene cluster that mediates the biosynthesis of the brasilane terpene glycosides brasilane D and E. The biosynthesis starts with the activity of the terpene cyclase braA that converts farnesyl pyrophosphate into the sesquiterpene alcohol trichobrasilenol. Subsequently, trichobrasilenol is glycosylated by the O-glycosyltransferase braB putatively using UDP-GlcNAc as sugar donor to yield brasilane A. The latter then undergoes two rounds of oxidation performed by the cytochrome P450 monooxygenase braC. In the first round braC hydroxylates C-12 forming brasilane D, which serves as substrate in the second round to establish the epoxide at the bond between C-5 and C-10 and oxidize the alcohol at C-12 to an aldehyde leading to the final product brasilane E. The polypeptide is Terpene cyclase braA (Annulohypoxylon truncatum (Hypoxylon truncatum)).